We begin with the raw amino-acid sequence, 365 residues long: tRNA/tmRNA (uracil-C(5))-methyltransferase (365 aa).

Gln188, Tyr216, Asn221, Glu237, and Asp297 together coordinate S-adenosyl-L-methionine. Catalysis depends on Cys322, which acts as the Nucleophile. The active-site Proton acceptor is Glu356.

Belongs to the class I-like SAM-binding methyltransferase superfamily. RNA M5U methyltransferase family. TrmA subfamily.

The catalysed reaction is uridine(54) in tRNA + S-adenosyl-L-methionine = 5-methyluridine(54) in tRNA + S-adenosyl-L-homocysteine + H(+). The enzyme catalyses uridine(341) in tmRNA + S-adenosyl-L-methionine = 5-methyluridine(341) in tmRNA + S-adenosyl-L-homocysteine + H(+). Its function is as follows. Dual-specificity methyltransferase that catalyzes the formation of 5-methyluridine at position 54 (m5U54) in all tRNAs, and that of position 341 (m5U341) in tmRNA (transfer-mRNA). This Aggregatibacter aphrophilus (strain NJ8700) (Haemophilus aphrophilus) protein is tRNA/tmRNA (uracil-C(5))-methyltransferase.